A 330-amino-acid chain; its full sequence is Aspartate--ammonia ligase (330 aa).

This sequence belongs to the class-II aminoacyl-tRNA synthetase family. AsnA subfamily.

The protein localises to the cytoplasm. The enzyme catalyses L-aspartate + NH4(+) + ATP = L-asparagine + AMP + diphosphate + H(+). Its pathway is amino-acid biosynthesis; L-asparagine biosynthesis; L-asparagine from L-aspartate (ammonia route): step 1/1. The sequence is that of Aspartate--ammonia ligase from Streptococcus equi subsp. zooepidemicus (strain H70).